Consider the following 284-residue polypeptide: uncharacterized protein (284 aa).

Residues 1–8 are Cytoplasmic-facing; sequence MLWKVSKM. Residues 9–25 traverse the membrane as a helical segment; the sequence is FLGGLVALTTISVATLY. The Extracellular segment spans residues 26-80; it reads HYQNRLVYPSWAQGARNHVDTPDSRGIPYEKLTLITQDHIKLEAWDIKNENSTST. A helical membrane pass occupies residues 81-101; it reads VLILCPNAGNIGYFILIIDIF. Residues 102–284 lie on the Cytoplasmic side of the membrane; it reads YRQFGMSVFI…RDFLIEKGFI (183 aa).

To S.pombe bem46 and M.tuberculosis Rv2307c.

It localises to the mitochondrion membrane. This is an uncharacterized protein from Saccharomyces cerevisiae (strain ATCC 204508 / S288c) (Baker's yeast).